The following is a 361-amino-acid chain: G-protein coupled receptor 52 (361 aa).

At 1 to 44 (MNESRWTEWRILNMSSSIVNVSEHHSCPLGFGHYSVEDVCIFET) the chain is on the extracellular side. N-linked (GlcNAc...) asparagine glycosylation is found at N2, N13, and N20. A helical membrane pass occupies residues 45-65 (VVIVLLTFLIISGNLTVIFVF). The Cytoplasmic segment spans residues 66-81 (HCAPLLHHYTTSYFIQ). The chain crosses the membrane as a helical span at residues 82 to 102 (TMAYADLLVGVTCLVPTLSLL). The Extracellular segment spans residues 103-115 (HYSTGVHESLTCQ). A disulfide bond links C114 and C193. The helical transmembrane segment at 116-136 (VFGYIISVLKSVSMACLACIS) threads the bilayer. The Cytoplasmic portion of the chain corresponds to 137–159 (VDRYLAITKPLSYNQLVTPCRLR). Residues 160–180 (ICIIMIWIYSCLIFLPSFFGW) traverse the membrane as a helical segment. Residues 181–205 (GKPGYHGDIFEWCATSWLTSAYFTC) are Extracellular-facing. Residues 206-226 (FIVCLLYAPAALVVCFTYFHI) traverse the membrane as a helical segment. Topologically, residues 227 to 265 (FKICRQHTKEINDRRARFPSHEVEASREAGHSPDRRYAM) are cytoplasmic. Residues 266-286 (VLFRITSVFYMLWLPYIIYFL) form a helical membrane-spanning segment. Over 287–296 (LESSRVLDNP) the chain is Extracellular. A helical membrane pass occupies residues 297 to 317 (TLSFLTTWLAISNSFCNCVIY). Over 318–361 (SLSNSVFRLGLRRLSETMCTSCVCAKDQEAQDPKPRRRANSCSI) the chain is Cytoplasmic.

It belongs to the G-protein coupled receptor 1 family. As to expression, expressed in brain, especially in striatum. Expressed in the striatum, nucleus accumbens, and lateral globus pallidus.

The protein resides in the cell membrane. G- protein coupled receptor activated by antipsychotics reserpine leading to an increase in intracellular cAMP and its internalization. May play a role in locomotor activity through modulation of dopamine, NMDA and ADORA2A-induced locomotor activity. These behavioral changes are accompanied by modulation of the dopamine receptor signaling pathway in striatum. Modulates HTT level via cAMP-dependent but PKA independent mechanisms throught activation of RAB39B that translocates HTT to the endoplasmic reticulum, thus avoiding proteasome degradation. This is G-protein coupled receptor 52 from Mus musculus (Mouse).